The sequence spans 414 residues: Schlafen-like protein 1 (414 aa).

The disordered stretch occupies residues 141-203; the sequence is LHHREQDDSG…ISQNRPSGVR (63 aa). Pro residues predominate over residues 154–185; the sequence is SHSPGPSPGPSPGPSPGFRRPPLPQLADPPPN. 268–275 contacts ATP; sequence GVEDSGLV. Residues 373-407 adopt a coiled-coil conformation; it reads RQKWTAELSKLEEKVDVLTLEKEQLQEQLRQRQTL.

The protein belongs to the Schlafen family. Subgroup I subfamily.

The sequence is that of Schlafen-like protein 1 (Slfnl1) from Rattus norvegicus (Rat).